The following is a 563-amino-acid chain: Arginine--tRNA ligase (563 aa).

The short motif at 120 to 130 is the 'HIGH' region element; the sequence is PNIAKPFHVGH.

This sequence belongs to the class-I aminoacyl-tRNA synthetase family. As to quaternary structure, monomer.

The protein resides in the cytoplasm. It catalyses the reaction tRNA(Arg) + L-arginine + ATP = L-arginyl-tRNA(Arg) + AMP + diphosphate. This chain is Arginine--tRNA ligase, found in Clostridium botulinum (strain Alaska E43 / Type E3).